The following is an 889-amino-acid chain: Alanine--tRNA ligase (889 aa).

Residues His574, His578, Cys682, and His686 each coordinate Zn(2+).

The protein belongs to the class-II aminoacyl-tRNA synthetase family. Requires Zn(2+) as cofactor.

The protein resides in the cytoplasm. It carries out the reaction tRNA(Ala) + L-alanine + ATP = L-alanyl-tRNA(Ala) + AMP + diphosphate. Functionally, catalyzes the attachment of alanine to tRNA(Ala) in a two-step reaction: alanine is first activated by ATP to form Ala-AMP and then transferred to the acceptor end of tRNA(Ala). Also edits incorrectly charged Ser-tRNA(Ala) and Gly-tRNA(Ala) via its editing domain. This Orientia tsutsugamushi (strain Ikeda) (Rickettsia tsutsugamushi) protein is Alanine--tRNA ligase.